The sequence spans 163 residues: Protein-export protein SecB (163 aa).

The protein belongs to the SecB family. As to quaternary structure, homotetramer, a dimer of dimers. One homotetramer interacts with 1 SecA dimer.

The protein localises to the cytoplasm. Functionally, one of the proteins required for the normal export of preproteins out of the cell cytoplasm. It is a molecular chaperone that binds to a subset of precursor proteins, maintaining them in a translocation-competent state. It also specifically binds to its receptor SecA. The polypeptide is Protein-export protein SecB (Azotobacter vinelandii (strain DJ / ATCC BAA-1303)).